We begin with the raw amino-acid sequence, 288 residues long: Alpha/beta hydrolase domain-containing protein 17B (288 aa).

Active-site charge relay system residues include Ser-170, Asp-235, and His-264.

This sequence belongs to the AB hydrolase superfamily. ABHD17 family. Post-translationally, palmitoylated on cysteine residues located in a cysteine cluster at the N-terminus which promotes membrane localization.

The protein resides in the cell membrane. Its subcellular location is the recycling endosome membrane. It localises to the cell projection. It is found in the dendritic spine. The protein localises to the postsynaptic density membrane. The catalysed reaction is S-hexadecanoyl-L-cysteinyl-[protein] + H2O = L-cysteinyl-[protein] + hexadecanoate + H(+). Hydrolyzes fatty acids from S-acylated cysteine residues in proteins. Has depalmitoylating activity towards nras. The polypeptide is Alpha/beta hydrolase domain-containing protein 17B (Xenopus laevis (African clawed frog)).